The following is a 280-amino-acid chain: Urease accessory protein UreD 1 (280 aa).

The protein belongs to the UreD family. UreD, UreF and UreG form a complex that acts as a GTP-hydrolysis-dependent molecular chaperone, activating the urease apoprotein by helping to assemble the nickel containing metallocenter of UreC. The UreE protein probably delivers the nickel.

It localises to the cytoplasm. Required for maturation of urease via the functional incorporation of the urease nickel metallocenter. The sequence is that of Urease accessory protein UreD 1 from Brucella canis (strain ATCC 23365 / NCTC 10854 / RM-666).